We begin with the raw amino-acid sequence, 264 residues long: Glutamate racemase (264 aa).

Residues 10–11 (DS) and 42–43 (YG) each bind substrate. The Proton donor/acceptor role is filled by Cys-73. 74–75 (NT) serves as a coordination point for substrate. The active-site Proton donor/acceptor is the Cys-183. 184–185 (TH) contributes to the substrate binding site.

The protein belongs to the aspartate/glutamate racemases family.

The enzyme catalyses L-glutamate = D-glutamate. The protein operates within cell wall biogenesis; peptidoglycan biosynthesis. Functionally, provides the (R)-glutamate required for cell wall biosynthesis. The sequence is that of Glutamate racemase from Streptococcus pyogenes serotype M49 (strain NZ131).